Reading from the N-terminus, the 207-residue chain is Pyridoxal 5'-phosphate synthase subunit PdxT (207 aa).

Position 53 to 55 (53 to 55 (GES)) interacts with L-glutamine. Catalysis depends on cysteine 85, which acts as the Nucleophile. L-glutamine is bound by residues arginine 114 and 143–144 (IR). Catalysis depends on charge relay system residues histidine 184 and glutamate 186.

The protein belongs to the glutaminase PdxT/SNO family. In the presence of PdxS, forms a dodecamer of heterodimers. Only shows activity in the heterodimer.

The catalysed reaction is aldehydo-D-ribose 5-phosphate + D-glyceraldehyde 3-phosphate + L-glutamine = pyridoxal 5'-phosphate + L-glutamate + phosphate + 3 H2O + H(+). It carries out the reaction L-glutamine + H2O = L-glutamate + NH4(+). The protein operates within cofactor biosynthesis; pyridoxal 5'-phosphate biosynthesis. In terms of biological role, catalyzes the hydrolysis of glutamine to glutamate and ammonia as part of the biosynthesis of pyridoxal 5'-phosphate. The resulting ammonia molecule is channeled to the active site of PdxS. The polypeptide is Pyridoxal 5'-phosphate synthase subunit PdxT (Acidothermus cellulolyticus (strain ATCC 43068 / DSM 8971 / 11B)).